We begin with the raw amino-acid sequence, 118 residues long: T cell receptor gamma variable 3 (118 aa).

The N-terminal stretch at 1–17 is a signal peptide; sequence MRWALLVLLAFLSPASQ. In terms of domain architecture, Ig-like spans 18–118; the sequence is KSSNLEGRTK…GVYYCATWDR (101 aa). C41 and C113 form a disulfide bridge. N-linked (GlcNAc...) asparagine glycosylation occurs at N106.

As to quaternary structure, gamma-delta TR is a heterodimer composed of a gamma and delta chain; disulfide-linked. The gamma-delta TR is associated with the transmembrane signaling CD3 coreceptor proteins following the stoichiometry: a single gamma-delta TR heterodimer associates with one CD3D-CD3E heterodimer, one CD3G-CD3E heterodimer and one CD247 homodimer forming a stable octameric structure. Upon activation, gamma-delta TR complex associates with FCER1G to initiate intracellular signaling.

It is found in the cell membrane. V region of the variable domain of T cell receptor (TR) gamma chain that participates in the antigen recognition. Gamma-delta TRs recognize a variety of self and foreign non-peptide antigens frequently expressed at the epithelial boundaries between the host and external environment, including endogenous lipids presented by MH-like protein CD1D and phosphoantigens presented by butyrophilin-like molecule BTN3A1. Upon antigen recognition induces rapid, innate-like immune responses involved in pathogen clearance and tissue repair. Binding of gamma-delta TR complex to antigen triggers phosphorylation of immunoreceptor tyrosine-based activation motifs (ITAMs) in the CD3 chains by the LCK and FYN kinases, allowing the recruitment, phosphorylation, and activation of ZAP70 that facilitates phosphorylation of the scaffolding proteins LCP2 and LAT. This lead to the formation of a supramolecular signalosome that recruits the phospholipase PLCG1, resulting in calcium mobilization and ERK activation, ultimately leading to T cell expansion and differentiation into effector cells. Gamma-delta TRs are produced through somatic rearrangement of a limited repertoire of variable (V), diversity (D), and joining (J) genes. The potential diversity of gamma-delta TRs is conferred by the unique ability to rearrange (D) genes in tandem and to utilize all three reading frames. The combinatorial diversity is considerably increased by the sequence exonuclease trimming and random nucleotide (N) region additions which occur during the V-(D)-J rearrangements. In Homo sapiens (Human), this protein is T cell receptor gamma variable 3.